Here is a 226-residue protein sequence, read N- to C-terminus: UPF0758 protein SPT_1135 (226 aa).

One can recognise an MPN domain in the interval Ser-103 to Leu-225. Zn(2+) is bound by residues His-174, His-176, and Asp-187. A JAMM motif motif is present at residues His-174–Asp-187.

It belongs to the UPF0758 family.

The polypeptide is UPF0758 protein SPT_1135 (Streptococcus pneumoniae (strain Taiwan19F-14)).